Consider the following 314-residue polypeptide: tRNA pseudouridine synthase B (314 aa).

Histidine 43 contributes to the substrate binding site. The active-site Nucleophile is aspartate 48. 3 residues coordinate substrate: tyrosine 76, tyrosine 179, and leucine 200.

Belongs to the pseudouridine synthase TruB family. Type 1 subfamily.

It catalyses the reaction uridine(55) in tRNA = pseudouridine(55) in tRNA. Functionally, responsible for synthesis of pseudouridine from uracil-55 in the psi GC loop of transfer RNAs. The polypeptide is tRNA pseudouridine synthase B (Salmonella choleraesuis (strain SC-B67)).